The following is a 60-amino-acid chain: Large ribosomal subunit protein bL32 (60 aa).

The disordered stretch occupies residues 1–23 (MAVPRNRHSNARKNIRRSHHAKQ).

Belongs to the bacterial ribosomal protein bL32 family.

The chain is Large ribosomal subunit protein bL32 from Chlamydia abortus (strain DSM 27085 / S26/3) (Chlamydophila abortus).